We begin with the raw amino-acid sequence, 160 residues long: Sperm protein associated with the nucleus on the X chromosome N2 (160 aa).

2 disordered regions span residues 1–48 (MEKP…TSEY) and 64–160 (SNQL…GEED). The segment covering 10 to 35 (GEKRKSPCDSNNRNDEMQETPNRDLA) has biased composition (basic and acidic residues). Positions 64 to 79 (SNQLENDQSQENSVNP) are enriched in polar residues. Acidic residues predominate over residues 81–97 (QEEEDEGSSQEDEDLDS). Positions 136-148 (SSERSSQEEKDPD) are enriched in basic and acidic residues.

Belongs to the SPAN-X family.

The chain is Sperm protein associated with the nucleus on the X chromosome N2 (SPANXN2) from Pongo pygmaeus (Bornean orangutan).